A 767-amino-acid chain; its full sequence is 5-methyltetrahydropteroyltriglutamate--homocysteine methyltransferase (767 aa).

K19 and N126 together coordinate 5-methyltetrahydropteroyltri-L-glutamate. L-homocysteine contacts are provided by residues I446–S448 and E499. Residues I446–S448 and E499 each bind L-methionine. Residues D504, Y527, R530 to Y531, and W576 contribute to the 5-methyltetrahydropteroyltri-L-glutamate site. Residue D614 participates in L-homocysteine binding. D614 provides a ligand contact to L-methionine. Residues H657, C659, and E679 each coordinate Zn(2+). H707 (proton donor) is an active-site residue. C739 is a Zn(2+) binding site.

The protein belongs to the vitamin-B12 independent methionine synthase family. Zn(2+) is required as a cofactor.

The catalysed reaction is 5-methyltetrahydropteroyltri-L-glutamate + L-homocysteine = tetrahydropteroyltri-L-glutamate + L-methionine. It functions in the pathway amino-acid biosynthesis; L-methionine biosynthesis via de novo pathway; L-methionine from L-homocysteine (MetE route): step 1/1. Its activity is regulated as follows. Inhibited weakly by methotrexate. Its function is as follows. Catalyzes the transfer of a methyl group from 5-methyltetrahydrofolate to homocysteine resulting in methionine formation. The polypeptide is 5-methyltetrahydropteroyltriglutamate--homocysteine methyltransferase (Candida albicans (strain SC5314 / ATCC MYA-2876) (Yeast)).